We begin with the raw amino-acid sequence, 147 residues long: Ribosome maturation factor RimP (147 aa).

Belongs to the RimP family.

It localises to the cytoplasm. Functionally, required for maturation of 30S ribosomal subunits. The polypeptide is Ribosome maturation factor RimP (Legionella pneumophila (strain Paris)).